The following is a 344-amino-acid chain: MRIIFYLTLLLFIFNKVKSDNCTIGGLTATSCNETSQQYYFTQDKFTSEDIIQIPFGAKLYFSGDVVFNYPVNFNCQPSLKKELSRFVYEIDCLQVFSNGTITYNAEEIYCSVDFSTVFDIDTMVDKPVDMVESWSRFMKPTKGFGETKVYEPVVYSRIKAQAGYKCDFNPGFRTSRRVPDKYALHSKCAWAKALFPAGDFNIRITPCNLQNNSESVRKLEEIGFDKNFYMEKLDFTPTDGLFYNGNRESIYIRYYPNFEKKFDLSSIQDIFDSYLYIINYCEDNPNKFEISFGMQSDLWDHRAFNLTDFQLVKNVNGTFEGSATRNQISIMVLILSVLLVLIL.

The first 19 residues, 1 to 19, serve as a signal peptide directing secretion; it reads MRIIFYLTLLLFIFNKVKS. Residues 323-344 constitute a propeptide, removed in mature form; sequence SATRNQISIMVLILSVLLVLIL.

Its subcellular location is the cell membrane. This is an uncharacterized protein from Dictyostelium discoideum (Social amoeba).